A 183-amino-acid chain; its full sequence is MNIQQIVEQLKQNEVVAYPTEAVFGLGCNPNSESAVQKLLVLKQRSVEKGLILVAPCLDYFLPFIDTTAFSQADWDRLQAKYDRPTTWVVPAKTTTPKFLTGQFDSIAVRLCDHPAVKQLCEQAGFALTSTSANLTTLPPCRTAEEVKTQFGADFPVLDLPVGEATNPSEIRDLFTHQLFRQG.

One can recognise a YrdC-like domain in the interval 1–183 (MNIQQIVEQL…LFTHQLFRQG (183 aa)).

The protein belongs to the SUA5 family. TsaC subfamily.

The protein localises to the cytoplasm. It catalyses the reaction L-threonine + hydrogencarbonate + ATP = L-threonylcarbamoyladenylate + diphosphate + H2O. Required for the formation of a threonylcarbamoyl group on adenosine at position 37 (t(6)A37) in tRNAs that read codons beginning with adenine. Catalyzes the conversion of L-threonine, HCO(3)(-)/CO(2) and ATP to give threonylcarbamoyl-AMP (TC-AMP) as the acyladenylate intermediate, with the release of diphosphate. The polypeptide is Threonylcarbamoyl-AMP synthase (Pasteurella multocida (strain Pm70)).